The sequence spans 374 residues: DNA integrity scanning protein DisA (374 aa).

The 139-residue stretch at 20–158 (EALMRASLSA…DGERRVLEES (139 aa)) folds into the DAC domain. ATP contacts are provided by residues glycine 87, leucine 105, and 118 to 122 (TRHRT).

The protein belongs to the DisA family. As to quaternary structure, homooctamer. The cofactor is Mg(2+).

The enzyme catalyses 2 ATP = 3',3'-c-di-AMP + 2 diphosphate. Participates in a DNA-damage check-point that is active prior to asymmetric division when DNA is damaged. DisA forms globular foci that rapidly scan along the chromosomes during sporulation, searching for lesions. When a lesion is present, DisA pauses at the lesion site. This triggers a cellular response that culminates in a temporary block in sporulation initiation. In terms of biological role, also has diadenylate cyclase activity, catalyzing the condensation of 2 ATP molecules into cyclic di-AMP (c-di-AMP). c-di-AMP acts as a signaling molecule that couples DNA integrity with progression of sporulation. The rise in c-di-AMP level generated by DisA while scanning the chromosome, operates as a positive signal that advances sporulation; upon encountering a lesion, the DisA focus arrests at the damaged site and halts c-di-AMP synthesis. This Streptomyces griseus subsp. griseus (strain JCM 4626 / CBS 651.72 / NBRC 13350 / KCC S-0626 / ISP 5235) protein is DNA integrity scanning protein DisA.